Here is a 490-residue protein sequence, read N- to C-terminus: Aspartyl/glutamyl-tRNA(Asn/Gln) amidotransferase subunit B (490 aa).

The protein belongs to the GatB/GatE family. GatB subfamily. In terms of assembly, heterotrimer of A, B and C subunits.

The enzyme catalyses L-glutamyl-tRNA(Gln) + L-glutamine + ATP + H2O = L-glutaminyl-tRNA(Gln) + L-glutamate + ADP + phosphate + H(+). It catalyses the reaction L-aspartyl-tRNA(Asn) + L-glutamine + ATP + H2O = L-asparaginyl-tRNA(Asn) + L-glutamate + ADP + phosphate + 2 H(+). Its function is as follows. Allows the formation of correctly charged Asn-tRNA(Asn) or Gln-tRNA(Gln) through the transamidation of misacylated Asp-tRNA(Asn) or Glu-tRNA(Gln) in organisms which lack either or both of asparaginyl-tRNA or glutaminyl-tRNA synthetases. The reaction takes place in the presence of glutamine and ATP through an activated phospho-Asp-tRNA(Asn) or phospho-Glu-tRNA(Gln). The polypeptide is Aspartyl/glutamyl-tRNA(Asn/Gln) amidotransferase subunit B (Symbiobacterium thermophilum (strain DSM 24528 / JCM 14929 / IAM 14863 / T)).